We begin with the raw amino-acid sequence, 309 residues long: Methionyl-tRNA formyltransferase (309 aa).

Residue serine 107–proline 110 participates in (6S)-5,6,7,8-tetrahydrofolate binding.

It belongs to the Fmt family.

It catalyses the reaction L-methionyl-tRNA(fMet) + (6R)-10-formyltetrahydrofolate = N-formyl-L-methionyl-tRNA(fMet) + (6S)-5,6,7,8-tetrahydrofolate + H(+). In terms of biological role, attaches a formyl group to the free amino group of methionyl-tRNA(fMet). The formyl group appears to play a dual role in the initiator identity of N-formylmethionyl-tRNA by promoting its recognition by IF2 and preventing the misappropriation of this tRNA by the elongation apparatus. This is Methionyl-tRNA formyltransferase from Borrelia turicatae (strain 91E135).